Here is a 785-residue protein sequence, read N- to C-terminus: Cadherin-7 (785 aa).

The first 27 residues, 1 to 27, serve as a signal peptide directing secretion; it reads MKLGKVEFCHLLQIIALFLCLSGMNQA. A propeptide spanning residues 28–47 is cleaved from the precursor; that stretch reads EPSRSRSKPYFQSGRTRTKR. Over 48-607 the chain is Extracellular; sequence SWVWNQFFVL…AYILPAGLST (560 aa). Cadherin domains lie at 49-153, 154-262, 263-377, 378-482, and 482-599; these read WVWN…EPKF, LDGP…PPRF, PRRS…PPVF, TSRL…APEF, and FAME…AEAY. N-linked (GlcNAc...) asparagine glycosylation is found at N449 and N530. The chain crosses the membrane as a helical span at residues 608–628; it reads GALIAILACVLTLLVLVLLIV. Residues 629 to 785 are Cytoplasmic-facing; the sequence is TMRRRKKEPL…YGSGPDCLYS (157 aa).

It localises to the cell membrane. In terms of biological role, cadherins are calcium-dependent cell adhesion proteins. They preferentially interact with themselves in a homophilic manner in connecting cells; cadherins may thus contribute to the sorting of heterogeneous cell types. The polypeptide is Cadherin-7 (CDH7) (Gallus gallus (Chicken)).